Reading from the N-terminus, the 443-residue chain is Xaa-Pro dipeptidase (443 aa).

Mn(2+) is bound by residues Asp246, Asp257, His339, Glu384, and Glu423.

The protein belongs to the peptidase M24B family. Bacterial-type prolidase subfamily. Mn(2+) is required as a cofactor.

The enzyme catalyses Xaa-L-Pro dipeptide + H2O = an L-alpha-amino acid + L-proline. Functionally, splits dipeptides with a prolyl residue in the C-terminal position. This chain is Xaa-Pro dipeptidase, found in Edwardsiella ictaluri (strain 93-146).